The chain runs to 285 residues: Transmembrane protein 53-A (285 aa).

Residues 165 to 185 (FLALAAFAILVIILRILLYPL) form a helical membrane-spanning segment.

The protein belongs to the TMEM53 family.

The protein resides in the nucleus outer membrane. Functionally, ensures normal bone formation, through the negative regulation of bone morphogenetic protein (BMP) signaling in osteoblast lineage cells by blocking cytoplasm-nucleus translocation of phosphorylated SMAD proteins. In Xenopus laevis (African clawed frog), this protein is Transmembrane protein 53-A (tmem53-a).